A 215-amino-acid chain; its full sequence is Myelin protein zero-like protein 2 (215 aa).

A signal peptide spans 1–26; sequence MYGKSPALVLPLLLSLQLTALCPTEA. In terms of domain architecture, Ig-like V-type spans 27-141; that stretch reads VEIYTSGALE…DGLVGTIRLS (115 aa). The Extracellular segment spans residues 27-154; sequence VEIYTSGALE…TVPFSEIYFL (128 aa). Residues Asn39 and Asn118 are each glycosylated (N-linked (GlcNAc...) asparagine). Cys47 and Cys123 are disulfide-bonded. The chain crosses the membrane as a helical span at residues 155 to 175; the sequence is AVAIGSACALMIIVVIVVVLF. The Cytoplasmic segment spans residues 176 to 215; sequence QHFRKKRWADRADKAEGTKSKEEEKLNQGNKVSVFVEDTD. Residues 187-201 are compositionally biased toward basic and acidic residues; sequence ADKAEGTKSKEEEKL. Positions 187–215 are disordered; sequence ADKAEGTKSKEEEKLNQGNKVSVFVEDTD.

It belongs to the myelin P0 protein family. In terms of tissue distribution, widely expressed. Expressed in the cochlea, in Deiters' cells, possibly at contact sites with the basilar membrane. Expressed in both outer and inner auditory hair cells. In the stria vascularis, detected in the basal cell layer. Not detected in thymocytes, lymphocytes, macrophage or dendritic cells.

The protein localises to the membrane. Functionally, mediates homophilic cell-cell adhesion. In Mus musculus (Mouse), this protein is Myelin protein zero-like protein 2 (Mpzl2).